Reading from the N-terminus, the 302-residue chain is Aliphatic sulfonates import ATP-binding protein SsuB (302 aa).

Low complexity predominate over residues 30 to 57 (PATADAQHTADAQHTADAQHTADAQHTA). The disordered stretch occupies residues 30 to 65 (PATADAQHTADAQHTADAQHTADAQHTAETAETRGA). The ABC transporter domain maps to 70 to 284 (IRIRGLRRTF…RRTDPAFDRL (215 aa)). Residue 102-109 (GRSGSGKS) participates in ATP binding.

The protein belongs to the ABC transporter superfamily. Aliphatic sulfonates importer (TC 3.A.1.17.2) family. As to quaternary structure, the complex is composed of two ATP-binding proteins (SsuB), two transmembrane proteins (SsuC) and a solute-binding protein (SsuA).

Its subcellular location is the cell membrane. It catalyses the reaction ATP + H2O + aliphatic sulfonate-[sulfonate-binding protein]Side 1 = ADP + phosphate + aliphatic sulfonateSide 2 + [sulfonate-binding protein]Side 1.. Its function is as follows. Part of the ABC transporter complex SsuABC involved in aliphatic sulfonates import. Responsible for energy coupling to the transport system. In Frankia casuarinae (strain DSM 45818 / CECT 9043 / HFP020203 / CcI3), this protein is Aliphatic sulfonates import ATP-binding protein SsuB.